The following is a 335-amino-acid chain: tRNA N6-adenosine threonylcarbamoyltransferase (335 aa).

Fe cation is bound by residues H111 and H115. Substrate is bound by residues 134–138 (LISGG), D167, G180, and N270. D298 contacts Fe cation.

It belongs to the KAE1 / TsaD family. Requires Fe(2+) as cofactor.

Its subcellular location is the cytoplasm. The catalysed reaction is L-threonylcarbamoyladenylate + adenosine(37) in tRNA = N(6)-L-threonylcarbamoyladenosine(37) in tRNA + AMP + H(+). Its function is as follows. Required for the formation of a threonylcarbamoyl group on adenosine at position 37 (t(6)A37) in tRNAs that read codons beginning with adenine. Is involved in the transfer of the threonylcarbamoyl moiety of threonylcarbamoyl-AMP (TC-AMP) to the N6 group of A37, together with TsaE and TsaB. TsaD likely plays a direct catalytic role in this reaction. In Nitrosococcus oceani (strain ATCC 19707 / BCRC 17464 / JCM 30415 / NCIMB 11848 / C-107), this protein is tRNA N6-adenosine threonylcarbamoyltransferase.